A 254-amino-acid chain; its full sequence is Decaprenylphosphoryl-2-keto-beta-D-erythro-pentose reductase (254 aa).

D67 serves as a coordination point for NAD(+). Y160 acts as the Proton acceptor in catalysis. K164 is an NAD(+) binding site.

It belongs to the short-chain dehydrogenases/reductases (SDR) family. In terms of assembly, interacts with DprE1 to form an epimerase complex.

The protein localises to the periplasm. It carries out the reaction trans,octa-cis-decaprenylphospho-beta-D-arabinofuranose + NAD(+) = trans,octa-cis-decaprenylphospho-beta-D-erythro-pentofuranosid-2-ulose + NADH + H(+). Its pathway is cell wall biogenesis; cell wall polysaccharide biosynthesis. In terms of biological role, component of the DprE1-DprE2 complex that catalyzes the 2-step epimerization of decaprenyl-phospho-ribose (DPR) to decaprenyl-phospho-arabinose (DPA), a key precursor that serves as the arabinose donor required for the synthesis of cell-wall arabinans. DprE1 catalyzes the first step of epimerization, namely FAD-dependent oxidation of the C2' hydroxyl of DPR to yield the keto intermediate decaprenyl-phospho-2'-keto-D-arabinose (DPX). The intermediate DPX is then transferred to DprE2 subunit of the epimerase complex, most probably through a 'substrate channel' at the interface of DprE1-DprE2 complex. DprE2 then catalyzes the second step of epimerization, the NAD(+)-dependent reduction of DPX that leads to the formation of DPA. This is Decaprenylphosphoryl-2-keto-beta-D-erythro-pentose reductase from Mycolicibacterium smegmatis (strain ATCC 700084 / mc(2)155) (Mycobacterium smegmatis).